A 317-amino-acid polypeptide reads, in one-letter code: Beta-sarcoglycan (317 aa).

Residues 1 to 31 (MAAAAAATEQQSSNGPVKKSMREKAVERRNV) are disordered. The Cytoplasmic portion of the chain corresponds to 1–64 (MAAAAAATEQ…GLRGRKGNLA (64 aa)). The span at 20-31 (SMREKAVERRNV) shows a compositional bias: basic and acidic residues. The chain crosses the membrane as a helical; Signal-anchor for type II membrane protein span at residues 65-85 (ICVIVLLFILAVINLIITLVI). Residues 86-317 (WAVIRIGPNG…TSDNPCGDLY (232 aa)) are Extracellular-facing. 3 N-linked (GlcNAc...) asparagine glycosylation sites follow: N157, N210, and N257. Intrachain disulfides connect C287-C313 and C289-C306.

Belongs to the sarcoglycan beta/delta/gamma/zeta family. As to quaternary structure, cross-link to form 2 major subcomplexes: one consisting of SGCB, SGCD and SGCG and the other consisting of SGCB and SGCD. The association between SGCB and SGCG is particularly strong while SGCA is loosely associated with the other sarcoglycans. In terms of processing, disulfide bonds are present.

It localises to the cell membrane. The protein resides in the sarcolemma. Its subcellular location is the cytoplasm. The protein localises to the cytoskeleton. In terms of biological role, component of the sarcoglycan complex, a subcomplex of the dystrophin-glycoprotein complex which forms a link between the F-actin cytoskeleton and the extracellular matrix. The protein is Beta-sarcoglycan (SGCB) of Bos taurus (Bovine).